A 364-amino-acid polypeptide reads, in one-letter code: Putative serine/threonine-protein phosphatase C06A1.3 (364 aa).

The tract at residues 1–24 (MSTDGNNNKKGSKEGPKSSEISKF) is disordered. Positions 11–24 (GSKEGPKSSEISKF) are enriched in basic and acidic residues. Mn(2+)-binding residues include D93, H95, D121, and N153. H154 (proton donor) is an active-site residue. Mn(2+)-binding residues include H202 and H277.

The protein belongs to the PPP phosphatase family. PP-1 subfamily. Mn(2+) is required as a cofactor.

The enzyme catalyses O-phospho-L-seryl-[protein] + H2O = L-seryl-[protein] + phosphate. It catalyses the reaction O-phospho-L-threonyl-[protein] + H2O = L-threonyl-[protein] + phosphate. This Caenorhabditis elegans protein is Putative serine/threonine-protein phosphatase C06A1.3.